Consider the following 593-residue polypeptide: NADH-quinone oxidoreductase subunit C/D (593 aa).

An NADH dehydrogenase I subunit C region spans residues 1–184 (MTADNALYIP…DPYSLTLAKQ (184 aa)). Residues 208-593 (DYMFLNLGPN…IDFVMADVDR (386 aa)) form an NADH dehydrogenase I subunit D region.

In the N-terminal section; belongs to the complex I 30 kDa subunit family. This sequence in the C-terminal section; belongs to the complex I 49 kDa subunit family. NDH-1 is composed of 13 different subunits. Subunits NuoB, CD, E, F, and G constitute the peripheral sector of the complex.

The protein resides in the cell inner membrane. It catalyses the reaction a quinone + NADH + 5 H(+)(in) = a quinol + NAD(+) + 4 H(+)(out). Its function is as follows. NDH-1 shuttles electrons from NADH, via FMN and iron-sulfur (Fe-S) centers, to quinones in the respiratory chain. The immediate electron acceptor for the enzyme in this species is believed to be ubiquinone. Couples the redox reaction to proton translocation (for every two electrons transferred, four hydrogen ions are translocated across the cytoplasmic membrane), and thus conserves the redox energy in a proton gradient. The protein is NADH-quinone oxidoreductase subunit C/D of Pseudomonas savastanoi pv. phaseolicola (strain 1448A / Race 6) (Pseudomonas syringae pv. phaseolicola (strain 1448A / Race 6)).